The sequence spans 1009 residues: C2 domain-containing protein aex-1 (1009 aa).

The 134-residue stretch at 812–945 folds into the C2 domain; the sequence is NAPHVDVHIS…ASEEKPTQRL (134 aa).

The protein belongs to the unc-13 family. In terms of tissue distribution, expressed in intestine, body wall muscles and some amphid neurons.

Its function is as follows. Involved in retrograde signaling from post-synaptic cells to pre-synaptic neurons, probably by regulating vesicle exocytosis in post-synaptic cells. Acts in muscles, to regulate the localization of synaptic vesicle fusion protein unc-13 likely during vesicle exocytosis and thus regulate retrograde signaling at the neuromuscular junction (NMJ). Regulates anterior body muscle contractions (aBOC) and the expulsion steps during the defecation motor program (DMP). Probably by regulating DMP, plays a homeostatic role in the uptake of triglycerides. Regulates locomotion. The sequence is that of C2 domain-containing protein aex-1 from Caenorhabditis elegans.